Here is a 321-residue protein sequence, read N- to C-terminus: uncharacterized protein (321 aa).

A signal peptide spans 1 to 18 (MKKMKKLLLLLSASFAFS).

This is an uncharacterized protein from Aquifex aeolicus (strain VF5).